Consider the following 404-residue polypeptide: SL1278 acyltransferase Chp1 (404 aa).

Residues 1 to 42 lie on the Periplasmic side of the membrane; it reads MKCPGVSDCVATVRHDNVFAIAAGLRWSAAVPPLHKGDAVTK. A helical membrane pass occupies residues 43 to 63; the sequence is LLVGAIAGGMLACAAILGDGI. At 64 to 404 the chain is on the cytoplasmic side; it reads ASADTALIVP…RGLLPKGKKH (341 aa). A PE-PPE domain is found at 104–325; that stretch reads PTATRHVVSY…LRPIIDRAYQ (222 aa).

The protein belongs to the mycobacterial PPE family.

It is found in the cell inner membrane. The enzyme catalyses 3 3'-(hydroxy)phthioceranyl-2'-palmitoyl(stearoyl)-2-O-sulfo-alpha,alpha-trehalose = 3,6,6'-tris-(hydroxy)phthioceranyl-2-palmitoyl(stearoyl)-2'-sulfo-alpha-alpha-trehalose + 2 2'-palmitoyl/stearoyl-2-O-sulfo-alpha,alpha-trehalose.. With respect to regulation, activity is potentiated by the SL-1 transporter MmpL8. Inhibited by the lipase inhibitor tetrahydrolipstatin (THL). In terms of biological role, involved in the final steps of the cell wall sulfolipid-1 (SL-1) biosynthesis. Catalyzes two successive acylations of the precursor 2-palmitoyl-3-(C43)-phthioceranyl-alpha, alpha'-D-trehalose-2'-sulfate (SL1278) to yield the tetraacylated sulfolipid SL-1. The chain is SL1278 acyltransferase Chp1 from Mycobacterium tuberculosis (strain ATCC 25618 / H37Rv).